We begin with the raw amino-acid sequence, 412 residues long: Multifunctional CCA protein (412 aa).

The ATP site is built by G8 and R11. G8 and R11 together coordinate CTP. Mg(2+)-binding residues include D21 and D23. Residues R91, R137, and R140 each coordinate ATP. Residues R91, R137, and R140 each contribute to the CTP site. The region spanning 228–329 (TGIHTLMTLS…VKLFDSIDAW (102 aa)) is the HD domain.

This sequence belongs to the tRNA nucleotidyltransferase/poly(A) polymerase family. Bacterial CCA-adding enzyme type 1 subfamily. Monomer. Can also form homodimers and oligomers. The cofactor is Mg(2+). Ni(2+) is required as a cofactor.

It catalyses the reaction a tRNA precursor + 2 CTP + ATP = a tRNA with a 3' CCA end + 3 diphosphate. The catalysed reaction is a tRNA with a 3' CCA end + 2 CTP + ATP = a tRNA with a 3' CCACCA end + 3 diphosphate. In terms of biological role, catalyzes the addition and repair of the essential 3'-terminal CCA sequence in tRNAs without using a nucleic acid template. Adds these three nucleotides in the order of C, C, and A to the tRNA nucleotide-73, using CTP and ATP as substrates and producing inorganic pyrophosphate. tRNA 3'-terminal CCA addition is required both for tRNA processing and repair. Also involved in tRNA surveillance by mediating tandem CCA addition to generate a CCACCA at the 3' terminus of unstable tRNAs. While stable tRNAs receive only 3'-terminal CCA, unstable tRNAs are marked with CCACCA and rapidly degraded. This chain is Multifunctional CCA protein, found in Shigella flexneri serotype 5b (strain 8401).